The primary structure comprises 228 residues: Protein TIFY 10a (228 aa).

The Tify domain occupies 75–110; sequence REQEKRQLTIFYGGKVLVFDDFPAEKAKDLMQMASK. Positions 164-189 match the Jas motif; the sequence is PQARKASLHRFLEKRKDRLQAKAPYQ. Residues 166-173 carry the Nuclear localization signal motif; sequence ARKASLHR. The tract at residues 175–228 is disordered; it reads LEKRKDRLQAKAPYQGSPSDASPVKKELQESQPWLGLGPQVAAPDLSLRQESSQ.

It belongs to the TIFY/JAZ family. In terms of assembly, interacts with COI1A and COI1B in a coronatine-dependent manner. Coronatine is an analog of jasmonoyl isoleucine (JA-Ile). In terms of processing, ubiquitinated. Targeted for degradation by the SCF(COI1) E3 ubiquitin ligase-proteasome pathway during jasmonate signaling.

The protein localises to the nucleus. Functionally, repressor of jasmonate responses. The chain is Protein TIFY 10a from Oryza sativa subsp. japonica (Rice).